An 874-amino-acid polypeptide reads, in one-letter code: Adhesion G-protein coupled receptor D1 (874 aa).

An N-terminal signal peptide occupies residues 1–25 (MEKLLRLCCWYSWLLLFYYNFQVRG). At 26 to 567 (VYSRSQDHPG…LARGHQVALS (542 aa)) the chain is on the extracellular side. A Pentraxin (PTX) domain is found at 79–276 (KGVTLLYYGR…ASPVMPTDAY (198 aa)). N-linked (GlcNAc...) asparagine glycosylation is found at asparagine 90, asparagine 185, asparagine 282, asparagine 302, asparagine 319, asparagine 394, asparagine 476, asparagine 501, and asparagine 533. One can recognise a GAIN-B domain in the interval 371–557 (QVTVEGSSAM…AILMQVVPLE (187 aa)). Intrachain disulfides connect cysteine 510-cysteine 539 and cysteine 527-cysteine 541. The GPS stretch occupies residues 510–557 (CAFLDFSSGEGVWSNHGCALTRGNLTYSVCRCTHLTNFAILMQVVPLE). Residues 546–554 (NFAILMQVV) are stachel. Residue glutamine 563 coordinates 17beta-hydroxy-5alpha-androstan-3-one. A helical transmembrane segment spans residues 568 to 590 (SISYVGCSLSVLCLVATLVTFAV). The Cytoplasmic portion of the chain corresponds to 591–601 (LSSVSTIRNQR). A helical membrane pass occupies residues 602 to 623 (YHIHANLSFAVLVAQVLLLISF). At 624 to 632 (RLEPGTTPC) the chain is on the extracellular side. Cysteines 632 and 704 form a disulfide. A helical transmembrane segment spans residues 633-655 (QVMAVLLHYFFLSAFAWMLVEGL). Residues 656–673 (HLYSMVIKVFGSEDSKHR) lie on the Cytoplasmic side of the membrane. The helical transmembrane segment at 674–695 (YYYGMGWGFPLLICIISLSFAM) threads the bilayer. Topologically, residues 696 to 710 (DSYGTSNNCWLSLAS) are extracellular. The helical transmembrane segment at 711-732 (GAIWAFVAPALFVIVVNIGILI) threads the bilayer. The Cytoplasmic portion of the chain corresponds to 733–757 (AVTRVISQISADNYKIHGDPSAFKL). Residues 758–780 (TAKAVAVLLPILGTSWVFGVLAV) form a helical membrane-spanning segment. Topologically, residues 781-783 (NGC) are extracellular. Residues 784 to 810 (AVVFQYMFATLNSLQGLFIFLFHCLLN) traverse the membrane as a helical segment. A 17beta-hydroxy-5alpha-androstan-3-one-binding site is contributed by asparagine 795. At 811-874 (SEVRAAFKHK…SAHRVDLSAV (64 aa)) the chain is on the cytoplasmic side. Positions 854–874 (TKLSPWDKSSHSAHRVDLSAV) are disordered. Over residues 861-874 (KSSHSAHRVDLSAV) the composition is skewed to basic and acidic residues.

Belongs to the G-protein coupled receptor 2 family. Adhesion G-protein coupled receptor (ADGR) subfamily. In terms of assembly, heterodimer of 2 chains generated by proteolytic processing; the large extracellular N-terminal fragment and the membrane-bound C-terminal fragment predominantly remain associated and non-covalently linked. Interacts with ESYT1; interaction takes place in absence of cytosolic calcium and inhibits the G protein-coupled receptor activity of ADGRD1. Autoproteolytically processed at the GPS region of the GAIN-B domain; this cleavage modulates receptor activity. Cleavage takes place early in the secretory pathway before N-glycosylation. As to expression, up-regulated in CD133(+) cell population of glioblastoma.

It is found in the cell membrane. Its activity is regulated as follows. Forms a heterodimer of 2 chains generated by proteolytic processing that remain associated through non-covalent interactions mediated by the GAIN-B domain. In the inactivated receptor, the Stachel sequence (also named stalk) is embedded in the GAIN-B domain, where it adopts a beta-strand conformation. On activation, the Stachel moves into the 7 transmembrane region and adopts a twisted hook-shaped configuration that forms contacts within the receptor, leading to coupling of a G-alpha protein, which activates signaling. The cleaved GAIN-B and N-terminal domains can then dissociate from the rest of the receptor. Interaction with ESYT1 in absence of cytosolic calcium inhibits the G protein-coupled receptor activity; interaction and inhibition is relieved when cytosolic calcium increases. Activated by AP503, a small molecule that activates ADGRD1 without activating androgen nuclear receptors: AP503 enhances muscle strength without eliciting androgenic adverse effects. Activated by the 8E3E8 antibody that targets the N-terminus. Adhesion G-protein coupled receptor (aGPCR) for androgen hormone 5alpha-dihydrotestosterone (5alpha-DHT), also named 17beta-hydroxy-5alpha-androstan-3-one, the most potent hormone among androgens. Also activated by methenolone drug. Ligand binding causes a conformation change that triggers signaling via guanine nucleotide-binding proteins (G proteins) and modulates the activity of downstream effectors, such as adenylate cyclase. ADGRD1 is coupled to G(s) G proteins and mediates activation of adenylate cyclase activity. Acts as a 5alpha-DHT receptor in muscle cells, thereby increasing intracellular cyclic AMP (cAMP) levels and enhancing muscle strength. This Homo sapiens (Human) protein is Adhesion G-protein coupled receptor D1.